A 694-amino-acid polypeptide reads, in one-letter code: Elongation factor G (694 aa).

A tr-type G domain is found at 11–285 (KDYRNIGIMA…AVIDYLPSPL (275 aa)). GTP is bound by residues 20 to 27 (AHIDAGKT), 84 to 88 (DTPGH), and 138 to 141 (NKMD).

It belongs to the TRAFAC class translation factor GTPase superfamily. Classic translation factor GTPase family. EF-G/EF-2 subfamily.

It is found in the cytoplasm. Functionally, catalyzes the GTP-dependent ribosomal translocation step during translation elongation. During this step, the ribosome changes from the pre-translocational (PRE) to the post-translocational (POST) state as the newly formed A-site-bound peptidyl-tRNA and P-site-bound deacylated tRNA move to the P and E sites, respectively. Catalyzes the coordinated movement of the two tRNA molecules, the mRNA and conformational changes in the ribosome. This is Elongation factor G from Mycoplasma mobile (strain ATCC 43663 / 163K / NCTC 11711) (Mesomycoplasma mobile).